The sequence spans 1025 residues: Putative calcium-transporting ATPase 11, plasma membrane-type (1025 aa).

At Met-1–Ser-157 the chain is on the cytoplasmic side. Residues Ala-19–Val-30 form an interaction with calmodulin region. Residues Phe-158–Ala-178 traverse the membrane as a helical segment. Over Val-179–Tyr-196 the chain is Lumenal. Residues Asp-197–Tyr-217 traverse the membrane as a helical segment. The Cytoplasmic portion of the chain corresponds to Lys-218–Leu-345. A helical transmembrane segment spans residues Asn-346–Val-365. The Lumenal portion of the chain corresponds to Val-366–Tyr-395. Residues Phe-396–Leu-413 traverse the membrane as a helical segment. Topologically, residues Ala-414–Ile-801 are cytoplasmic. The active-site 4-aspartylphosphate intermediate is Asp-451. Mg(2+) is bound by residues Asp-746 and Asp-750. The helical transmembrane segment at Gln-802–Phe-820 threads the bilayer. Over Val-821–Leu-831 the chain is Lumenal. Residues Thr-832–Ala-852 traverse the membrane as a helical segment. Topologically, residues Thr-853–Phe-872 are cytoplasmic. The chain crosses the membrane as a helical span at residues Ile-873–Leu-895. The Lumenal segment spans residues Asn-896 to Gly-907. Residues Pro-908 to Asn-929 traverse the membrane as a helical segment. At Glu-930 to Lys-947 the chain is on the cytoplasmic side. Residues Ser-948 to Leu-969 form a helical membrane-spanning segment. Over Gly-970–Ser-979 the chain is Lumenal. The helical transmembrane segment at Trp-980–Lys-1001 threads the bilayer. Residues Cys-1002–Ala-1025 are Cytoplasmic-facing.

Belongs to the cation transport ATPase (P-type) (TC 3.A.3) family. Type IIB subfamily.

Its subcellular location is the membrane. The enzyme catalyses Ca(2+)(in) + ATP + H2O = Ca(2+)(out) + ADP + phosphate + H(+). Its activity is regulated as follows. Activated by calmodulin. This magnesium-dependent enzyme catalyzes the hydrolysis of ATP coupled with the translocation of calcium from the cytosol out of the cell or into organelles. This is Putative calcium-transporting ATPase 11, plasma membrane-type (ACA11) from Arabidopsis thaliana (Mouse-ear cress).